Here is a 234-residue protein sequence, read N- to C-terminus: Cell fusion protein dni1 (234 aa).

An N-terminal signal peptide occupies residues 1–32 (MLFLHSVVQGTGTLCTLAAWILLALVMTGCQS). Residues 33–96 (STTSKFQLFS…RSKFLINEVH (64 aa)) lie on the Extracellular side of the membrane. A helical transmembrane segment spans residues 97-117 (PWMIVFSFCVCGVSFLMGVVS). Residues 118–132 (SLPLIGRLEFLRNIR) are Cytoplasmic-facing. The chain crosses the membrane as a helical span at residues 133–153 (ISLSFFSFFSILVTALFAHVA). Topologically, residues 154-178 (VSSFVMAVGNGTQNRVTASLGKKAM) are extracellular. The chain crosses the membrane as a helical span at residues 179-199 (IFLWCSMGLVTLTGITDSIIL). Topologically, residues 200-234 (LVTSRTKKIRKTILEKSKVLTPSSSFSSKSSTTKY) are cytoplasmic.

It belongs to the SUR7 family.

The protein localises to the cell membrane. The protein resides in the cell tip. Cell membrane protein which plays a relevant role in coordinating membrane organization and cell wall remodeling during mating. In Schizosaccharomyces pombe (strain 972 / ATCC 24843) (Fission yeast), this protein is Cell fusion protein dni1 (dni1).